The chain runs to 175 residues: Small ribosomal subunit protein bS16 (175 aa).

It belongs to the bacterial ribosomal protein bS16 family.

This is Small ribosomal subunit protein bS16 from Cytophaga hutchinsonii (strain ATCC 33406 / DSM 1761 / CIP 103989 / NBRC 15051 / NCIMB 9469 / D465).